Here is a 161-residue protein sequence, read N- to C-terminus: Allophycocyanin beta chain (161 aa).

N4-methylasparagine is present on asparagine 71. Residue cysteine 81 participates in (2R,3E)-phycocyanobilin binding.

The protein belongs to the phycobiliprotein family. In terms of assembly, heterodimer of an alpha and a beta chain. Contains one covalently linked phycocyanobilin chromophore.

It is found in the cellular thylakoid membrane. Its function is as follows. Light-harvesting photosynthetic bile pigment-protein from the phycobiliprotein complex. Allophycocyanin has a maximum absorption at approximately 650 nanometers. This is Allophycocyanin beta chain (apcB) from Anabaena variabilis.